Reading from the N-terminus, the 239-residue chain is uncharacterized protein (239 aa).

This is an uncharacterized protein from Methanocaldococcus jannaschii (strain ATCC 43067 / DSM 2661 / JAL-1 / JCM 10045 / NBRC 100440) (Methanococcus jannaschii).